Here is a 503-residue protein sequence, read N- to C-terminus: Sodium/hydrogen exchanger 3 (503 aa).

The Cytoplasmic segment spans residues Met-1–Ser-22. Residues Val-23–Leu-43 form a helical membrane-spanning segment. Residues Glu-44–Glu-51 lie on the Vacuolar side of the membrane. A glycan (N-linked (GlcNAc...) asparagine) is linked at Asn-50. The chain crosses the membrane as a helical span at residues Ser-52–Gly-72. The Cytoplasmic portion of the chain corresponds to Lys-73–Arg-76. Residues Ile-77–Ala-97 constitute an intramembrane region (helical). Over Gly-98 to Asn-109 the chain is Cytoplasmic. Residues Phe-110 to Phe-130 form a helical membrane-spanning segment. Residues Gly-131 to Lys-138 lie on the Vacuolar side of the membrane. Residues Met-139–Thr-159 form a helical membrane-spanning segment. Topologically, residues Asp-160–Pro-174 are cytoplasmic. A helical transmembrane segment spans residues Leu-175–Phe-195. The Vacuolar segment spans residues Asn-196 to Phe-219. A helical transmembrane segment spans residues Tyr-220–Ile-240. Residues Lys-241 to Tyr-265 are Cytoplasmic-facing. The chain crosses the membrane as a helical span at residues Met-266–Met-286. Topologically, residues Ser-287–Thr-305 are vacuolar. An N-linked (GlcNAc...) asparagine glycan is attached at Asn-293. The chain crosses the membrane as a helical span at residues Phe-306 to Leu-326. The Cytoplasmic segment spans residues Asp-327 to Ser-345. Residues Ser-346 to Leu-366 traverse the membrane as a helical segment. The Vacuolar portion of the chain corresponds to Ser-367–Gln-383. Asn-368 carries N-linked (GlcNAc...) asparagine glycosylation. The chain crosses the membrane as a helical span at residues Val-384–Thr-406. Residues Thr-407–Asn-416 are Cytoplasmic-facing. Residues Ala-417–Leu-437 traverse the membrane as a helical segment. At Thr-438–His-503 the chain is on the vacuolar side.

The protein belongs to the monovalent cation:proton antiporter 1 (CPA1) transporter (TC 2.A.36) family. In terms of tissue distribution, expressed in roots.

The protein localises to the vacuole membrane. It carries out the reaction Na(+)(in) + H(+)(out) = Na(+)(out) + H(+)(in). The enzyme catalyses K(+)(in) + H(+)(out) = K(+)(out) + H(+)(in). Functionally, may act in low affinity electroneutral exchange of protons for cations such as Na(+) or K(+) across membranes. May also exchange Li(+) and Cs(+) with a lower affinity. The chain is Sodium/hydrogen exchanger 3 (NHX3) from Arabidopsis thaliana (Mouse-ear cress).